The sequence spans 903 residues: Translation initiation factor IF-2 (903 aa).

The segment at 49–314 (LNREHGSGPD…GSSLQQGFNK (266 aa)) is disordered. The span at 68–82 (STLNIQGTGGKSKSV) shows a compositional bias: polar residues. Basic and acidic residues-rich tracts occupy residues 93 to 163 (VKRD…EAAE) and 174 to 225 (EVSK…ENAT). Over residues 265-279 (GRARPAKVARQKKSN) the composition is skewed to basic residues. Residues 280–293 (KHSESKADREEARA) are compositionally biased toward basic and acidic residues. The 170-residue stretch at 402-571 (PRAPVVTIMG…LLQSEVLELK (170 aa)) folds into the tr-type G domain. Residues 411–418 (GHVDHGKT) form a G1 region. Position 411 to 418 (411 to 418 (GHVDHGKT)) interacts with GTP. Residues 436–440 (GITQH) form a G2 region. Residues 457-460 (DTPG) are G3. GTP contacts are provided by residues 457 to 461 (DTPGH) and 511 to 514 (NKID). The tract at residues 511–514 (NKID) is G4. The segment at 547–549 (SAK) is G5.

Belongs to the TRAFAC class translation factor GTPase superfamily. Classic translation factor GTPase family. IF-2 subfamily.

The protein resides in the cytoplasm. One of the essential components for the initiation of protein synthesis. Protects formylmethionyl-tRNA from spontaneous hydrolysis and promotes its binding to the 30S ribosomal subunits. Also involved in the hydrolysis of GTP during the formation of the 70S ribosomal complex. This is Translation initiation factor IF-2 from Cronobacter sakazakii (strain ATCC BAA-894) (Enterobacter sakazakii).